A 671-amino-acid polypeptide reads, in one-letter code: MAQIQHQGQNANGGVAVPGAAAAEAAAAAAGAAAAAAGAAQQGTTSLYVGDLDATVTDSQLFEAFTQAGQVVSVRVCRDMTTRRSLGYGYVNYATPQDASRALNELNFMALNGRAIRVMYSVRDPSLRKSGVGNIFIKNLDKSIDHKALHETFSAFGPILSCKVAVDPSGQSKGYGFVQYDTDEAAQGAIDKLNGMLLNDKQVYVGPFVHKLQRDPSGEKVKFTNVYVKNLSESLSDEELNKVFGEFGVTTSCVIMRDGEGKSKGFGFVNFENSDDAARAVDALNGKTFDDKEWFVGKAQKKSERETELKQKFEQSLKEAADKSQGSNLYVKNLDESVTDDKLREHFAPFGTITSCKVMRDPSGVSRGSGFVAFSTPEEATRAITEMNGKMIVTKPLYVALAQRKEDRKARLQAQFSQMRPVNMPPAVGPRMQMYPPGGPPMGQQLFYGQGPPAMIPQPGFGYQQQLVPGMRPGGSPMPNFFMPMMQQGQQQQQQQQQQQRPGGGRRGALPQPQQPSPMMQQQMHPRGRMYRYPQRDVNTMPGPTQNMLSVPYDVSSGGGVHHRDSPTSQPVPIVALATRLANAAPEQQRTMLGENLYPLVEQLEPESAAKVTGMLLEMDQTEVLHLLESPEALKAKVTEAMDVLRSVAQQQAGGAADQLASLSLGDNIVP.

4 consecutive RRM domains span residues 45-123 (TSLY…YSVR), 133-210 (GNIF…PFVH), 224-301 (TNVY…KAQK), and 327-404 (SNLY…LAQR). A disordered region spans residues 467-526 (LVPGMRPGGSPMPNFFMPMMQQGQQQQQQQQQQQRPGGGRRGALPQPQQPSPMMQQQMHP). 2 stretches are compositionally biased toward low complexity: residues 483–501 (MPMM…QQQR) and 508–525 (GALP…QQMH). Residues 573 to 650 (PIVALATRLA…AMDVLRSVAQ (78 aa)) form the PABC domain.

The protein belongs to the polyadenylate-binding protein type-1 family. As to quaternary structure, interacts with ERD15/CID1. Interacts with Turnip mosaic virus (TuMV) VPg-Pro and RNA-dependent RNA polymerase (RdRp). As to expression, expressed predominantly in immature flowers.

The protein localises to the cytoplasm. It is found in the nucleus. In terms of biological role, binds the poly(A) tail of mRNA. Appears to be an important mediator of the multiple roles of the poly(A) tail in mRNA biogenesis, stability and translation. During infection with potyvirus TuMV, acts as a potential integral component of the viral replicase complex that could play an important role in the regulation of potyviral RNA-dependent RNA polymerase (RdRp). This is Polyadenylate-binding protein 8 (PAB8) from Arabidopsis thaliana (Mouse-ear cress).